Consider the following 442-residue polypeptide: Coiled-coil domain-containing protein 91 (442 aa).

The segment at Met-1–Asp-16 is GGA1-binding motif. Residues Met-1–Pro-27 are disordered. Phosphoserine occurs at positions 43 and 46. The tract at residues Glu-48 to Ser-79 is disordered. Coiled coils occupy residues Gly-127 to Ile-213 and Cys-248 to Gln-409. The interval Leu-211–Arg-414 is homodimerization.

In terms of assembly, homodimer. Interacts with GGA1, GGA2 and AP1G1.

The protein resides in the membrane. It is found in the golgi apparatus. It localises to the trans-Golgi network membrane. Its subcellular location is the trans-Golgi network. Involved in the regulation of membrane traffic through the trans-Golgi network (TGN). Functions in close cooperation with the GGAs in the sorting of hydrolases to lysosomes. This chain is Coiled-coil domain-containing protein 91 (Ccdc91), found in Rattus norvegicus (Rat).